We begin with the raw amino-acid sequence, 2498 residues long: Nuclear receptor corepressor 1 (2498 aa).

Disordered regions lie at residues 1–38 (MSSS…QQEY), 54–84 (IQQQ…SGYD), 134–169 (SEVK…SKLS), and 198–223 (QQQL…VEQK). Basic and acidic residues-rich tracts occupy residues 71 to 82 (PVSDRPQDRRSG), 134 to 148 (SEVK…KHES), and 204 to 213 (EAAKPPEPEK). Positions 154–304 (SGQPGDDQDA…REQNICQRYD (151 aa)) are interaction with tbl1xr1-A. Residues 168 to 208 (LSKEELIQSMDRVDREIAKVEQQILKLKKKQQQLEEEAAKP) adopt a coiled-coil conformation. Positions 427–478 (QFMNVWTDHEKEIFKEKFVRHPKNFGLIASYLERKNVSDCVLYYYLTKKNEN) constitute an SANT 1 domain. Basic residues predominate over residues 483–493 (VRRNYPKRRGR). Disordered regions lie at residues 483-649 (VRRN…GSKS), 668-912 (NLLQ…FGSR), 1075-1122 (SLSD…GTPG), 1417-1436 (DLVS…IMEG), 1470-1583 (SWGV…QRES), 1737-1851 (PGTQ…AQES), and 1916-1990 (PQME…TAHT). Basic and acidic residues-rich tracts occupy residues 502–525 (SQEE…KEDE) and 535–548 (KEEL…KIDA). Residues 502–552 (SQEEKEIEKVEEEKADRNDKKEDERREEEEKEEKEELREGAKDKIDAVAED) are a coiled coil. The segment covering 582–611 (ASEAAAANAVTTATTAPVTTTSTATTVAPV) has biased composition (low complexity). A compositionally biased stretch (pro residues) spans 612 to 627 (PVAPPPEEPTPPPPPQ). An SANT 2 domain is found at 628–665 (EQSLVDHGRNWGAIAKMVGSKSESQCKNFYFNYKRRHN). Residues 689 to 699 (QCDSIASTVSA) are compositionally biased toward polar residues. Positions 700-719 (QEDDENEASNEEENPEDSEG) are enriched in acidic residues. Composition is skewed to low complexity over residues 727–738 (ESAPSPSPAEAA) and 761–774 (DAAS…SPSP). The segment covering 854–863 (MERLMDRAEA) has biased composition (basic and acidic residues). 2 stretches are compositionally biased toward polar residues: residues 872 to 891 (QNIS…SATC) and 1102 to 1122 (ATSS…GTPG). Residues 1484 to 1501 (KMGERSKHEDTKSSDAIR) are compositionally biased toward basic and acidic residues. Residues 1505 to 1516 (TSVVSSGPSVLR) are compositionally biased toward polar residues. Positions 1545–1558 (PSPMSRSSPMARSA) are enriched in low complexity. Positions 1765-1804 (VSAERERERERERERDREREKEQRERESDRERERDRLAHA) form a coiled coil. Over residues 1767–1802 (AERERERERERERDREREKEQRERESDRERERDRLA) the composition is skewed to basic and acidic residues. 2 stretches are compositionally biased toward low complexity: residues 1803 to 1813 (HAAAAAAAASA) and 1820 to 1835 (RPVS…RPSS). The segment covering 1842–1851 (PSPSVRAQES) has biased composition (polar residues). The segment covering 1921-1942 (AKPKESKNDSARSEENLSRRNA) has biased composition (basic and acidic residues). Residues 1958–1980 (SPYTSSSFSSSKSQSQPSSAVYS) are compositionally biased toward low complexity. The short motif at 2012–2016 (IDVII) is the CORNR box 1 element. Positions 2022–2109 (SDKDGRERNS…SPPQQTIPGH (88 aa)) are disordered. The segment covering 2031 to 2040 (SQSSDASSSH) has biased composition (low complexity). Over residues 2043–2052 (HRYEAPRETI) the composition is skewed to basic and acidic residues. Residues 2093–2106 (RYRQQQESPPQQTI) show a composition bias toward polar residues. The CORNR box 2 motif lies at 2123–2127 (ICHII). A compositionally biased stretch (low complexity) spans 2136–2145 (PVNQPLQQPP). The segment at 2136-2222 (PVNQPLQQPP…PISPPQAPML (87 aa)) is disordered. A compositionally biased stretch (polar residues) spans 2146–2175 (ASTFQSTNPTSTAVRTKASSRFSPESQVQP). Residues 2190–2209 (IPDKPRGRPGKSPDRGHISE) show a composition bias toward basic and acidic residues. Positions 2326–2330 (LEDII) match the CORNR box 3 motif. Disordered stretches follow at residues 2344–2446 (DHGV…YNPL) and 2464–2498 (TSMT…DSDE). Residues 2353–2362 (QGNQSGTPNS) are compositionally biased toward polar residues. The segment covering 2380-2394 (HKQKLISKYGSRKTK) has biased composition (basic residues). Polar residues-rich tracts occupy residues 2464-2476 (TSMT…QQSR) and 2489-2498 (QYETLSDSDE).

The protein belongs to the N-CoR nuclear receptor corepressors family. Forms a large corepressor complex that contains sin3a/b, histone deacetylases hdac1 and hdac2, rbbp4 and possibly rbbp7. Interacts with the thyroid receptor (TR, composed of rxra and thrb) and the retinoid acid receptor (RAR, composed of rxra and rara) in the absence of ligand. Interacts with tbl1xr1-A and possibly tbl1xr1-B. Interacts with zbtb33/kaiso.

The protein resides in the nucleus. Functionally, mediates transcriptional repression by certain nuclear receptors. Participates in complexes which promote histone deacetylation and the formation of repressive chromatin structures which may impede access by the basal transcription machinery. In association with hdac3, may play a role in the regulation of the circadian clock. This chain is Nuclear receptor corepressor 1 (ncor1), found in Xenopus laevis (African clawed frog).